The following is a 128-amino-acid chain: Transcription antitermination protein NusB (128 aa).

Belongs to the NusB family.

Its function is as follows. Involved in transcription antitermination. Required for transcription of ribosomal RNA (rRNA) genes. Binds specifically to the boxA antiterminator sequence of the ribosomal RNA (rrn) operons. In Listeria monocytogenes serotype 4a (strain HCC23), this protein is Transcription antitermination protein NusB.